A 71-amino-acid polypeptide reads, in one-letter code: MRKSFYSWLMTQRNPKSNEPVAILADLVFDDTTFPKHTNDFELISRYLEDQASFSFNLGQFDEIWEDYLAH.

Belongs to the UPF0346 family.

The protein is UPF0346 protein MGAS2096_Spy0401 of Streptococcus pyogenes serotype M12 (strain MGAS2096).